A 336-amino-acid polypeptide reads, in one-letter code: Biotin synthase (336 aa).

A Radical SAM core domain is found at 54–281 (QAIQLSTLLS…KSYVRLSAGR (228 aa)). Residues Cys69, Cys73, and Cys76 each contribute to the [4Fe-4S] cluster site. Residues Cys113, Cys144, Cys204, and Arg276 each contribute to the [2Fe-2S] cluster site.

This sequence belongs to the radical SAM superfamily. Biotin synthase family. As to quaternary structure, homodimer. It depends on [4Fe-4S] cluster as a cofactor. [2Fe-2S] cluster is required as a cofactor.

It catalyses the reaction (4R,5S)-dethiobiotin + (sulfur carrier)-SH + 2 reduced [2Fe-2S]-[ferredoxin] + 2 S-adenosyl-L-methionine = (sulfur carrier)-H + biotin + 2 5'-deoxyadenosine + 2 L-methionine + 2 oxidized [2Fe-2S]-[ferredoxin]. Its pathway is cofactor biosynthesis; biotin biosynthesis; biotin from 7,8-diaminononanoate: step 2/2. Functionally, catalyzes the conversion of dethiobiotin (DTB) to biotin by the insertion of a sulfur atom into dethiobiotin via a radical-based mechanism. The chain is Biotin synthase from Actinobacillus pleuropneumoniae serotype 7 (strain AP76).